We begin with the raw amino-acid sequence, 870 residues long: Valine--tRNA ligase (870 aa).

The 'HIGH' region signature appears at 42 to 52; sequence PNVTGVLHIGH. Residues 527–531 carry the 'KMSKS' region motif; that stretch reads KMSKS. Lysine 530 contributes to the ATP binding site. Positions 800 to 870 form a coiled coil; sequence LENVDLSGIL…ISVELQNLRG (71 aa).

The protein belongs to the class-I aminoacyl-tRNA synthetase family. ValS type 1 subfamily. In terms of assembly, monomer.

The protein resides in the cytoplasm. It carries out the reaction tRNA(Val) + L-valine + ATP = L-valyl-tRNA(Val) + AMP + diphosphate. Functionally, catalyzes the attachment of valine to tRNA(Val). As ValRS can inadvertently accommodate and process structurally similar amino acids such as threonine, to avoid such errors, it has a 'posttransfer' editing activity that hydrolyzes mischarged Thr-tRNA(Val) in a tRNA-dependent manner. The polypeptide is Valine--tRNA ligase (Campylobacter jejuni subsp. jejuni serotype O:2 (strain ATCC 700819 / NCTC 11168)).